The primary structure comprises 102 residues: NADH-quinone oxidoreductase subunit K (102 aa).

Transmembrane regions (helical) follow at residues 5 to 25 (LSHY…GIFL), 31 to 51 (IVIL…MVAF), and 65 to 85 (LFIL…LVVF).

It belongs to the complex I subunit 4L family. NDH-1 is composed of 14 different subunits. Subunits NuoA, H, J, K, L, M, N constitute the membrane sector of the complex.

It is found in the cell inner membrane. The catalysed reaction is a quinone + NADH + 5 H(+)(in) = a quinol + NAD(+) + 4 H(+)(out). NDH-1 shuttles electrons from NADH, via FMN and iron-sulfur (Fe-S) centers, to quinones in the respiratory chain. The immediate electron acceptor for the enzyme in this species is believed to be ubiquinone. Couples the redox reaction to proton translocation (for every two electrons transferred, four hydrogen ions are translocated across the cytoplasmic membrane), and thus conserves the redox energy in a proton gradient. The sequence is that of NADH-quinone oxidoreductase subunit K from Rhizobium leguminosarum bv. trifolii (strain WSM2304).